The primary structure comprises 378 residues: Ribosomal RNA large subunit methyltransferase G (378 aa).

It belongs to the methyltransferase superfamily. RlmG family.

It localises to the cytoplasm. It catalyses the reaction guanosine(1835) in 23S rRNA + S-adenosyl-L-methionine = N(2)-methylguanosine(1835) in 23S rRNA + S-adenosyl-L-homocysteine + H(+). Specifically methylates the guanine in position 1835 (m2G1835) of 23S rRNA. In Shewanella baltica (strain OS195), this protein is Ribosomal RNA large subunit methyltransferase G.